A 285-amino-acid chain; its full sequence is 2-dehydro-3-deoxyphosphooctonate aldolase (285 aa).

It belongs to the KdsA family.

The protein resides in the cytoplasm. It carries out the reaction D-arabinose 5-phosphate + phosphoenolpyruvate + H2O = 3-deoxy-alpha-D-manno-2-octulosonate-8-phosphate + phosphate. Its pathway is carbohydrate biosynthesis; 3-deoxy-D-manno-octulosonate biosynthesis; 3-deoxy-D-manno-octulosonate from D-ribulose 5-phosphate: step 2/3. It functions in the pathway bacterial outer membrane biogenesis; lipopolysaccharide biosynthesis. This chain is 2-dehydro-3-deoxyphosphooctonate aldolase, found in Leptothrix cholodnii (strain ATCC 51168 / LMG 8142 / SP-6) (Leptothrix discophora (strain SP-6)).